Consider the following 249-residue polypeptide: Uroplakin-3b-like protein 1 (249 aa).

An N-terminal signal peptide occupies residues 1–26 (MGPHGKQSVLRMPLLLLLTCVQSGTG). Residues 27-194 (LESINYAPQL…PGSQGKGTVV (168 aa)) lie on the Extracellular side of the membrane. 3 N-linked (GlcNAc...) asparagine glycosylation sites follow: Asn63, Asn82, and Asn133. A helical transmembrane segment spans residues 195 to 215 (IIAFLSILLAILLVVFLVLVI). Residues 216–249 (SACLSTSGSSPEEQVRMRHYHTHHMGSLRAERSS) lie on the Cytoplasmic side of the membrane.

It belongs to the uroplakin-3 family.

The protein localises to the membrane. The polypeptide is Uroplakin-3b-like protein 1 (Mus musculus (Mouse)).